Reading from the N-terminus, the 477-residue chain is Transmembrane and coiled-coil domain protein 3 (477 aa).

Residues M1–K24 form a disordered region. Phosphoserine is present on S46. 2 coiled-coil regions span residues K63–K83 and K112–T149. The segment at A234 to T280 is disordered. S253 is subject to Phosphoserine. Residues S258–T280 show a composition bias toward polar residues. Positions Q284–Q398 form a coiled coil. Helical transmembrane passes span V409–V429 and F450–I470.

Belongs to the TEX28 family. As to quaternary structure, may form homodimers and heterodimers with TMCC2 or TMCC3 via the coiled-coil domains. Interacts with ribosomal proteins RPL4 and RPS6.

It is found in the endoplasmic reticulum membrane. This is Transmembrane and coiled-coil domain protein 3 from Mus musculus (Mouse).